The sequence spans 229 residues: Potassium/proton antiporter CemA (229 aa).

The next 3 membrane-spanning stretches (helical) occupy residues 7–27 (FTPL…SLSF), 107–127 (ILHF…SLLG), and 189–209 (IISG…KYWI).

The protein belongs to the CemA family.

Its subcellular location is the plastid. It localises to the chloroplast inner membrane. The catalysed reaction is K(+)(in) + H(+)(out) = K(+)(out) + H(+)(in). In terms of biological role, contributes to K(+)/H(+) antiport activity by supporting proton efflux to control proton extrusion and homeostasis in chloroplasts in a light-dependent manner to modulate photosynthesis. Prevents excessive induction of non-photochemical quenching (NPQ) under continuous-light conditions. Indirectly promotes efficient inorganic carbon uptake into chloroplasts. The polypeptide is Potassium/proton antiporter CemA (Lactuca sativa (Garden lettuce)).